Reading from the N-terminus, the 479-residue chain is Glutamyl-tRNA(Gln) amidotransferase subunit A (479 aa).

Catalysis depends on charge relay system residues Lys71 and Ser146. The Acyl-ester intermediate role is filled by Ser170.

It belongs to the amidase family. GatA subfamily. In terms of assembly, heterotrimer of A, B and C subunits.

The enzyme catalyses L-glutamyl-tRNA(Gln) + L-glutamine + ATP + H2O = L-glutaminyl-tRNA(Gln) + L-glutamate + ADP + phosphate + H(+). In terms of biological role, allows the formation of correctly charged Gln-tRNA(Gln) through the transamidation of misacylated Glu-tRNA(Gln) in organisms which lack glutaminyl-tRNA synthetase. The reaction takes place in the presence of glutamine and ATP through an activated gamma-phospho-Glu-tRNA(Gln). The protein is Glutamyl-tRNA(Gln) amidotransferase subunit A of Lactobacillus gasseri (strain ATCC 33323 / DSM 20243 / BCRC 14619 / CIP 102991 / JCM 1131 / KCTC 3163 / NCIMB 11718 / NCTC 13722 / AM63).